The following is a 223-amino-acid chain: 7-carboxy-7-deazaguanine synthase (223 aa).

Substrate-binding positions include 12–14 (LQG) and R27. Residues 18–223 (FTGVPAIFIR…MQTHKYLNIA (206 aa)) form the Radical SAM core domain. C31, C35, and C38 together coordinate [4Fe-4S] cluster. T40 serves as a coordination point for Mg(2+). T92 provides a ligand contact to substrate. S-adenosyl-L-methionine contacts are provided by residues G94 and 136 to 138 (SPK).

This sequence belongs to the radical SAM superfamily. 7-carboxy-7-deazaguanine synthase family. In terms of assembly, homodimer. The cofactor is [4Fe-4S] cluster. S-adenosyl-L-methionine serves as cofactor. Requires Mg(2+) as cofactor.

It carries out the reaction 6-carboxy-5,6,7,8-tetrahydropterin + H(+) = 7-carboxy-7-deazaguanine + NH4(+). It functions in the pathway purine metabolism; 7-cyano-7-deazaguanine biosynthesis. In terms of biological role, catalyzes the complex heterocyclic radical-mediated conversion of 6-carboxy-5,6,7,8-tetrahydropterin (CPH4) to 7-carboxy-7-deazaguanine (CDG), a step common to the biosynthetic pathways of all 7-deazapurine-containing compounds. The chain is 7-carboxy-7-deazaguanine synthase from Escherichia coli (strain K12).